The following is a 179-amino-acid chain: MAKLHDYYKDEVVKKLMTEFNYNSVMQVPRVEKITLNMGVGEAIADKKLLDNAAADLAAISGQKPLITKARKSVAGFKIRQGYPIGCKVTLRGERMWEFLERLISIAVPRIRDFRGLSAKSFDGRGNYSMGVREQIIFPEIDYDKVDRVRGLDITITTTAKSDDEGRALLAAFNFPFRK.

The protein belongs to the universal ribosomal protein uL5 family. As to quaternary structure, part of the 50S ribosomal subunit; part of the 5S rRNA/L5/L18/L25 subcomplex. Contacts the 5S rRNA and the P site tRNA. Forms a bridge to the 30S subunit in the 70S ribosome.

Its function is as follows. This is one of the proteins that bind and probably mediate the attachment of the 5S RNA into the large ribosomal subunit, where it forms part of the central protuberance. In the 70S ribosome it contacts protein S13 of the 30S subunit (bridge B1b), connecting the 2 subunits; this bridge is implicated in subunit movement. Contacts the P site tRNA; the 5S rRNA and some of its associated proteins might help stabilize positioning of ribosome-bound tRNAs. This Pectobacterium carotovorum subsp. carotovorum (strain PC1) protein is Large ribosomal subunit protein uL5.